Here is an 890-residue protein sequence, read N- to C-terminus: Protein translocase subunit SecA (890 aa).

ATP contacts are provided by residues Gln-85, 103–107 (GEGKT), and Asp-491.

Belongs to the SecA family. As to quaternary structure, monomer and homodimer. Part of the essential Sec protein translocation apparatus which comprises SecA, SecYEG and auxiliary proteins SecDF. Other proteins may also be involved.

It is found in the cell membrane. The protein localises to the cytoplasm. The enzyme catalyses ATP + H2O + cellular proteinSide 1 = ADP + phosphate + cellular proteinSide 2.. Its function is as follows. Part of the Sec protein translocase complex. Interacts with the SecYEG preprotein conducting channel. Has a central role in coupling the hydrolysis of ATP to the transfer of proteins into and across the cell membrane, serving as an ATP-driven molecular motor driving the stepwise translocation of polypeptide chains across the membrane. The sequence is that of Protein translocase subunit SecA from Mycoplasmoides gallisepticum (strain R(low / passage 15 / clone 2)) (Mycoplasma gallisepticum).